The chain runs to 168 residues: CASP-like protein 4D1 (168 aa).

At Met-1–Arg-11 the chain is on the cytoplasmic side. Residues Met-12 to Leu-32 form a helical membrane-spanning segment. Residues Thr-33 to Arg-57 are Extracellular-facing. The chain crosses the membrane as a helical span at residues Tyr-58–Leu-78. Residues Tyr-79 to Asp-97 lie on the Cytoplasmic side of the membrane. Residues Phe-98–Ser-118 traverse the membrane as a helical segment. The Extracellular portion of the chain corresponds to Thr-119–Ser-144. The chain crosses the membrane as a helical span at residues Leu-145 to Pro-165. Residues Lys-166–Val-168 are Cytoplasmic-facing.

The protein belongs to the Casparian strip membrane proteins (CASP) family. In terms of assembly, homodimer and heterodimers.

The protein resides in the cell membrane. The chain is CASP-like protein 4D1 from Ricinus communis (Castor bean).